The chain runs to 607 residues: Glutamine--fructose-6-phosphate aminotransferase [isomerizing] (607 aa).

Catalysis depends on cysteine 2, which acts as the Nucleophile; for GATase activity. A Glutamine amidotransferase type-2 domain is found at 2–217; it reads CGIIGILGKK…DGDWAVLTRE (216 aa). SIS domains follow at residues 277–422 and 455–597; these read TVRS…QRGS and ICRD…VDQP. Lysine 602 serves as the catalytic For Fru-6P isomerization activity.

As to quaternary structure, homodimer.

It is found in the cytoplasm. It carries out the reaction D-fructose 6-phosphate + L-glutamine = D-glucosamine 6-phosphate + L-glutamate. In terms of biological role, catalyzes the first step in hexosamine metabolism, converting fructose-6P into glucosamine-6P using glutamine as a nitrogen source. The chain is Glutamine--fructose-6-phosphate aminotransferase [isomerizing] from Bartonella quintana (strain Toulouse) (Rochalimaea quintana).